A 361-amino-acid polypeptide reads, in one-letter code: Chorismate synthase (361 aa).

The NADP(+) site is built by Arg-48 and Arg-54. Residues 131–133 (RSS), 243–244 (NA), Gly-287, 302–306 (KPTSS), and Arg-328 each bind FMN.

Belongs to the chorismate synthase family. Homotetramer. FMNH2 is required as a cofactor.

The catalysed reaction is 5-O-(1-carboxyvinyl)-3-phosphoshikimate = chorismate + phosphate. It participates in metabolic intermediate biosynthesis; chorismate biosynthesis; chorismate from D-erythrose 4-phosphate and phosphoenolpyruvate: step 7/7. In terms of biological role, catalyzes the anti-1,4-elimination of the C-3 phosphate and the C-6 proR hydrogen from 5-enolpyruvylshikimate-3-phosphate (EPSP) to yield chorismate, which is the branch point compound that serves as the starting substrate for the three terminal pathways of aromatic amino acid biosynthesis. This reaction introduces a second double bond into the aromatic ring system. The chain is Chorismate synthase from Rhodopseudomonas palustris (strain BisA53).